A 330-amino-acid polypeptide reads, in one-letter code: Protein C10 (330 aa).

It belongs to the poxviridae C4/C10 protein family.

The polypeptide is Protein C10 (Homo sapiens (Human)).